The chain runs to 267 residues: Tryptophan synthase alpha chain (267 aa).

Residues E47 and D58 each act as proton acceptor in the active site.

This sequence belongs to the TrpA family. In terms of assembly, tetramer of two alpha and two beta chains.

It carries out the reaction (1S,2R)-1-C-(indol-3-yl)glycerol 3-phosphate + L-serine = D-glyceraldehyde 3-phosphate + L-tryptophan + H2O. The protein operates within amino-acid biosynthesis; L-tryptophan biosynthesis; L-tryptophan from chorismate: step 5/5. The alpha subunit is responsible for the aldol cleavage of indoleglycerol phosphate to indole and glyceraldehyde 3-phosphate. The protein is Tryptophan synthase alpha chain of Pelodictyon phaeoclathratiforme (strain DSM 5477 / BU-1).